The primary structure comprises 318 residues: Porphobilinogen deaminase (318 aa).

An S-(dipyrrolylmethanemethyl)cysteine modification is found at Cys-241.

This sequence belongs to the HMBS family. In terms of assembly, monomer. It depends on dipyrromethane as a cofactor.

It carries out the reaction 4 porphobilinogen + H2O = hydroxymethylbilane + 4 NH4(+). It participates in porphyrin-containing compound metabolism; protoporphyrin-IX biosynthesis; coproporphyrinogen-III from 5-aminolevulinate: step 2/4. In terms of biological role, tetrapolymerization of the monopyrrole PBG into the hydroxymethylbilane pre-uroporphyrinogen in several discrete steps. The polypeptide is Porphobilinogen deaminase (Geobacter sp. (strain M21)).